A 113-amino-acid polypeptide reads, in one-letter code: Hydrogenase maturation factor HypA (113 aa).

Position 2 (His2) interacts with Ni(2+). The Zn(2+) site is built by Cys73, Cys76, Cys89, and Cys92.

This sequence belongs to the HypA/HybF family.

Its function is as follows. Involved in the maturation of [NiFe] hydrogenases. Required for nickel insertion into the metal center of the hydrogenase. The polypeptide is Hydrogenase maturation factor HypA (Azotobacter chroococcum mcd 1).